The primary structure comprises 322 residues: Ribokinase (322 aa).

Residues Met25–Asp27, Gly53–Asn57, and Glu154 each bind substrate. Residues Asn199, Thr235 to Gly240, and Thr256 contribute to the ATP site. Asp263 and Thr265 together coordinate K(+). ATP-binding positions include Gly268–Asp269 and Asn295. Asp269 is a substrate binding site. Asp269 (proton acceptor) is an active-site residue. Residues Ser301, Ala304, Gly306, and Ser310 each coordinate K(+).

Belongs to the carbohydrate kinase PfkB family. Ribokinase subfamily. In terms of assembly, homodimer. The cofactor is Mg(2+).

The protein resides in the cytoplasm. It localises to the nucleus. The catalysed reaction is D-ribose + ATP = D-ribose 5-phosphate + ADP + H(+). Its pathway is carbohydrate metabolism; D-ribose degradation; D-ribose 5-phosphate from beta-D-ribopyranose: step 2/2. Its activity is regulated as follows. Activated by a monovalent cation that binds near, but not in, the active site. The most likely occupant of the site in vivo is potassium. Ion binding induces a conformational change that may alter substrate affinity. Competitively inhibited by phosphonoacetic acid, etidronate, 2-carboxethylphosphonic acid, N-(phosphonomethyl)glycine, N-(phosphonomethyl)iminodiacetic acid and clodronate. Functionally, catalyzes the phosphorylation of ribose at O-5 in a reaction requiring ATP and magnesium. The resulting D-ribose-5-phosphate can then be used either for sythesis of nucleotides, histidine, and tryptophan, or as a component of the pentose phosphate pathway. This is Ribokinase from Homo sapiens (Human).